The primary structure comprises 33 residues: Photosystem II reaction center protein Psb30 (33 aa).

Residues 8–28 form a helical membrane-spanning segment; sequence QLGSLLLITVAGPLIVFFLFI.

It belongs to the Psb30/Ycf12 family. In terms of assembly, PSII is composed of 1 copy each of membrane proteins PsbA, PsbB, PsbC, PsbD, PsbE, PsbF, PsbH, PsbI, PsbJ, PsbK, PsbL, PsbM, PsbT, PsbY, PsbZ, Psb30/Ycf12, peripheral proteins of the oxygen-evolving complex and a large number of cofactors. It forms dimeric complexes.

The protein localises to the plastid. The protein resides in the chloroplast thylakoid membrane. Functionally, a core subunit of photosystem II (PSII), probably helps stabilize the reaction center. The protein is Photosystem II reaction center protein Psb30 of Euglena anabaena (Euglenaria anabaena).